A 419-amino-acid polypeptide reads, in one-letter code: BTB/POZ domain-containing protein KCTD20 (419 aa).

In terms of domain architecture, BTB spans 117–191; the sequence is EKVTLLVDGT…YKTGIINCPD (75 aa).

As to quaternary structure, interacts with AKT1; AKT2 and AKT3. Interacts with PPP2CA and PPP1CA. Part of a complex containing MARK4. In terms of tissue distribution, ubiquitously expressed.

The protein resides in the cytoplasm. In terms of biological role, promotes the phosphorylation of AKT family members. The sequence is that of BTB/POZ domain-containing protein KCTD20 (Kctd20) from Mus musculus (Mouse).